Here is a 152-residue protein sequence, read N- to C-terminus: MFRGATMVNLDSKGRLAVPTRYRELLNEQSEGQMVCTIDLHQPCLLLYPLPEWEIIEQKLSRLSSMNPAERRVQRLLLGHASECQMDSAGRLLLATTLRQHAGLTKEVMLVGQFNKFELWDEQTWYQQVKDDIDAEQSTQEPLSERLQDLSL.

SpoVT-AbrB domains follow at residues 5 to 52 and 81 to 124; these read ATMV…PLPE and ASEC…DEQT.

It belongs to the MraZ family. In terms of assembly, forms oligomers.

The protein resides in the cytoplasm. The protein localises to the nucleoid. Its function is as follows. Negatively regulates its own expression and that of the subsequent genes in the proximal part of the division and cell wall (dcw) gene cluster. Acts by binding directly to DNA. May also regulate the expression of genes outside the dcw cluster. The chain is Transcriptional regulator MraZ from Serratia proteamaculans (strain 568).